The chain runs to 352 residues: Anthranilate phosphoribosyltransferase (352 aa).

Residues Gly94, 97–98, Ser102, 104–107, 122–130, and Ser134 contribute to the 5-phospho-alpha-D-ribose 1-diphosphate site; these read GS, NIST, and KHGNRAVSS. Gly94 is a binding site for anthranilate. Ser106 is a binding site for Mg(2+). Residue Asn125 participates in anthranilate binding. Arg180 is a binding site for anthranilate. The Mg(2+) site is built by Asp239 and Glu240.

This sequence belongs to the anthranilate phosphoribosyltransferase family. As to quaternary structure, homodimer. It depends on Mg(2+) as a cofactor.

It catalyses the reaction N-(5-phospho-beta-D-ribosyl)anthranilate + diphosphate = 5-phospho-alpha-D-ribose 1-diphosphate + anthranilate. The protein operates within amino-acid biosynthesis; L-tryptophan biosynthesis; L-tryptophan from chorismate: step 2/5. In terms of biological role, catalyzes the transfer of the phosphoribosyl group of 5-phosphorylribose-1-pyrophosphate (PRPP) to anthranilate to yield N-(5'-phosphoribosyl)-anthranilate (PRA). In Geobacter sp. (strain M21), this protein is Anthranilate phosphoribosyltransferase.